A 105-amino-acid polypeptide reads, in one-letter code: Replication restart protein PriB (105 aa).

In terms of domain architecture, SSB spans 1 to 102; it reads MTTNRLVLSG…LHAEQIELID (102 aa).

This sequence belongs to the PriB family. As to quaternary structure, homodimer. Interacts with PriA and DnaT. Component of the replication restart primosome. Primosome assembly occurs via a 'hand-off' mechanism. PriA binds to replication forks, subsequently PriB then DnaT bind; DnaT then displaces ssDNA to generate the helicase loading substrate.

Its function is as follows. Involved in the restart of stalled replication forks, which reloads the replicative helicase on sites other than the origin of replication; the PriA-PriB pathway is the major replication restart pathway. During primosome assembly it facilitates complex formation between PriA and DnaT on DNA; stabilizes PriA on DNA. Stimulates the DNA unwinding activity of PriA helicase. This Photorhabdus laumondii subsp. laumondii (strain DSM 15139 / CIP 105565 / TT01) (Photorhabdus luminescens subsp. laumondii) protein is Replication restart protein PriB.